A 76-amino-acid polypeptide reads, in one-letter code: Small ribosomal subunit protein bS18 (76 aa).

This sequence belongs to the bacterial ribosomal protein bS18 family. Part of the 30S ribosomal subunit. Forms a tight heterodimer with protein bS6.

Functionally, binds as a heterodimer with protein bS6 to the central domain of the 16S rRNA, where it helps stabilize the platform of the 30S subunit. The polypeptide is Small ribosomal subunit protein bS18 (Stutzerimonas stutzeri (strain A1501) (Pseudomonas stutzeri)).